Reading from the N-terminus, the 600-residue chain is DNA polymerase alpha subunit B (600 aa).

Residues 112 to 167 (AYTTPSKGPHKRVSSTPETPLTKRSISTRSPHQLLSPSSFSPSATPSQKYSSRTNR) form a disordered region. Residues 125–140 (SSTPETPLTKRSISTR) are compositionally biased toward polar residues. A Phosphoserine modification is found at serine 126. Phosphothreonine is present on residues threonine 127 and threonine 130. Serine 141, serine 147, serine 152, and serine 154 each carry phosphoserine. The segment covering 141-158 (SPHQLLSPSSFSPSATPS) has biased composition (low complexity).

This sequence belongs to the DNA polymerase alpha subunit B family. In terms of assembly, component of the alpha DNA polymerase complex (also known as the alpha DNA polymerase-primase complex) consisting of four subunits: the catalytic subunit POLA1, the regulatory subunit POLA2, and the primase complex subunits PRIM1 and PRIM2 respectively. Within the complex, POLA1 directly interacts with PRIM2. Post-translationally, phosphorylated in a cell cycle-dependent manner, in G2/M phase.

Its subcellular location is the nucleus. In terms of biological role, accessory subunit of the DNA polymerase alpha complex (also known as the alpha DNA polymerase-primase complex) which plays an essential role in the initiation of DNA synthesis. During the S phase of the cell cycle, the DNA polymerase alpha complex (composed of a catalytic subunit POLA1, an accessory subunit POLA2 and two primase subunits, the catalytic subunit PRIM1 and the regulatory subunit PRIM2) is recruited to DNA at the replicative forks via direct interactions with MCM10 and WDHD1. The primase subunit of the polymerase alpha complex initiates DNA synthesis by oligomerising short RNA primers on both leading and lagging strands. These primers are initially extended by the polymerase alpha catalytic subunit and subsequently transferred to polymerase delta and polymerase epsilon for processive synthesis on the lagging and leading strand, respectively. This Rattus norvegicus (Rat) protein is DNA polymerase alpha subunit B (Pola2).